Here is a 540-residue protein sequence, read N- to C-terminus: tRNA-2-methylthio-N(6)-dimethylallyladenosine synthase (540 aa).

The MTTase N-terminal domain occupies 4–120 (RSYEVRTFGC…LPVLLERARH (117 aa)). Positions 13, 49, 83, 157, 161, and 164 each coordinate [4Fe-4S] cluster. Positions 143–374 (RASHHSAWVS…ALQDEISWAE (232 aa)) constitute a Radical SAM core domain. A TRAM domain is found at 376 to 468 (RALVGRRVEV…PHHLTADGPL (93 aa)). The interval 480–540 (WALGRDGDGG…ADACCTPVRR (61 aa)) is disordered. 2 stretches are compositionally biased toward low complexity: residues 492-502 (AAAQQPADGRP) and 520-533 (GPASADAASAGADA).

It belongs to the methylthiotransferase family. MiaB subfamily. Monomer. The cofactor is [4Fe-4S] cluster.

It is found in the cytoplasm. It carries out the reaction N(6)-dimethylallyladenosine(37) in tRNA + (sulfur carrier)-SH + AH2 + 2 S-adenosyl-L-methionine = 2-methylsulfanyl-N(6)-dimethylallyladenosine(37) in tRNA + (sulfur carrier)-H + 5'-deoxyadenosine + L-methionine + A + S-adenosyl-L-homocysteine + 2 H(+). Functionally, catalyzes the methylthiolation of N6-(dimethylallyl)adenosine (i(6)A), leading to the formation of 2-methylthio-N6-(dimethylallyl)adenosine (ms(2)i(6)A) at position 37 in tRNAs that read codons beginning with uridine. This chain is tRNA-2-methylthio-N(6)-dimethylallyladenosine synthase, found in Frankia casuarinae (strain DSM 45818 / CECT 9043 / HFP020203 / CcI3).